The primary structure comprises 133 residues: Ribonuclease P protein component (133 aa).

It belongs to the RnpA family. Consists of a catalytic RNA component (M1 or rnpB) and a protein subunit.

It catalyses the reaction Endonucleolytic cleavage of RNA, removing 5'-extranucleotides from tRNA precursor.. Its function is as follows. RNaseP catalyzes the removal of the 5'-leader sequence from pre-tRNA to produce the mature 5'-terminus. It can also cleave other RNA substrates such as 4.5S RNA. The protein component plays an auxiliary but essential role in vivo by binding to the 5'-leader sequence and broadening the substrate specificity of the ribozyme. The sequence is that of Ribonuclease P protein component from Corynebacterium glutamicum (strain R).